We begin with the raw amino-acid sequence, 571 residues long: Urease subunit alpha (571 aa).

Residues 132–571 enclose the Urease domain; it reads GGIDAHIHFI…VALAQRYFLF (440 aa). Ni(2+) contacts are provided by His-137, His-139, and Lys-220. Lys-220 carries the post-translational modification N6-carboxylysine. His-222 lines the substrate pocket. The Ni(2+) site is built by His-249 and His-275. Catalysis depends on His-323, which acts as the Proton donor. A Ni(2+)-binding site is contributed by Asp-363.

It belongs to the metallo-dependent hydrolases superfamily. Urease alpha subunit family. As to quaternary structure, heterotrimer of UreA (gamma), UreB (beta) and UreC (alpha) subunits. Three heterotrimers associate to form the active enzyme. Requires Ni cation as cofactor. Carboxylation allows a single lysine to coordinate two nickel ions.

The protein localises to the cytoplasm. The catalysed reaction is urea + 2 H2O + H(+) = hydrogencarbonate + 2 NH4(+). Its pathway is nitrogen metabolism; urea degradation; CO(2) and NH(3) from urea (urease route): step 1/1. The sequence is that of Urease subunit alpha from Halalkalibacterium halodurans (strain ATCC BAA-125 / DSM 18197 / FERM 7344 / JCM 9153 / C-125) (Bacillus halodurans).